Here is a 387-residue protein sequence, read N- to C-terminus: 1-deoxy-D-xylulose 5-phosphate reductoisomerase (387 aa).

Positions 10, 11, 12, 13, 36, 37, 38, and 123 each coordinate NADPH. 1-deoxy-D-xylulose 5-phosphate is bound at residue Lys-124. Glu-125 is a binding site for NADPH. A Mn(2+)-binding site is contributed by Asp-149. 1-deoxy-D-xylulose 5-phosphate is bound by residues Ser-150, Glu-151, Ser-175, and His-198. Residue Glu-151 coordinates Mn(2+). Gly-204 contacts NADPH. 1-deoxy-D-xylulose 5-phosphate contacts are provided by Ser-211, Asn-216, Lys-217, and Glu-220. Position 220 (Glu-220) interacts with Mn(2+).

It belongs to the DXR family. Requires Mg(2+) as cofactor. It depends on Mn(2+) as a cofactor.

It catalyses the reaction 2-C-methyl-D-erythritol 4-phosphate + NADP(+) = 1-deoxy-D-xylulose 5-phosphate + NADPH + H(+). It functions in the pathway isoprenoid biosynthesis; isopentenyl diphosphate biosynthesis via DXP pathway; isopentenyl diphosphate from 1-deoxy-D-xylulose 5-phosphate: step 1/6. In terms of biological role, catalyzes the NADPH-dependent rearrangement and reduction of 1-deoxy-D-xylulose-5-phosphate (DXP) to 2-C-methyl-D-erythritol 4-phosphate (MEP). This chain is 1-deoxy-D-xylulose 5-phosphate reductoisomerase, found in Pelotomaculum thermopropionicum (strain DSM 13744 / JCM 10971 / SI).